The primary structure comprises 465 residues: MAQAPVADIFAGKYSVGQQVTVKGWVRTRRDSKAGLSFVALHDGSCFDPIQVIALNTLNNYADIQRLTTSCSIIATGVLKESQGQGQSLEIEADEIEIVGWVENPDTYPMAPKRHSLEYLREHAHLRPRTNVIGAVTRVRNCLSQAIHRFFHENGYCWVSTPILTASDTEGAGEMFRVSTLDMMNVPTTEQGQVDFSQDFFGKETFLTVSGQLNGETYATAMSKIYTFGPTFRAENSNTSRHLAEFWMIEPEVAFADLSDIAQLSEDLLKYVFKAVLAERADDMAFFAQRINKDAITRLEKVIEQDFVRMDYTDAIEILQNCGKKFEFPVSWGVDLSSEHERYLAEEHVGAPIIMQNYPKDIKAFYMRINDDNKTVAAMDVLAPGIGEIIGGSQREERLDVFDRRLAEMGLDQEDYSWYRDLRRYGTVPHSGFGLGFERLVAYVTGMQNVRDVIAFPRTPGNANY.

The protein belongs to the class-II aminoacyl-tRNA synthetase family. As to quaternary structure, homodimer.

The protein resides in the cytoplasm. The enzyme catalyses tRNA(Asn) + L-asparagine + ATP = L-asparaginyl-tRNA(Asn) + AMP + diphosphate + H(+). In Pseudoalteromonas atlantica (strain T6c / ATCC BAA-1087), this protein is Asparagine--tRNA ligase.